A 312-amino-acid chain; its full sequence is Ornithine carbamoyltransferase (312 aa).

Carbamoyl phosphate-binding positions include 57 to 60 (STRT), Q84, R108, and 135 to 138 (HPCQ). L-ornithine contacts are provided by residues N166, D226, and 230 to 231 (SM). Carbamoyl phosphate contacts are provided by residues 265–266 (CL) and R293.

The protein belongs to the aspartate/ornithine carbamoyltransferase superfamily. OTCase family.

The protein localises to the cytoplasm. The catalysed reaction is carbamoyl phosphate + L-ornithine = L-citrulline + phosphate + H(+). It functions in the pathway amino-acid biosynthesis; L-arginine biosynthesis; L-arginine from L-ornithine and carbamoyl phosphate: step 1/3. In terms of biological role, reversibly catalyzes the transfer of the carbamoyl group from carbamoyl phosphate (CP) to the N(epsilon) atom of ornithine (ORN) to produce L-citrulline. The sequence is that of Ornithine carbamoyltransferase from Brucella suis biovar 1 (strain 1330).